Reading from the N-terminus, the 157-residue chain is Small ribosomal subunit protein uS7 (157 aa).

The protein belongs to the universal ribosomal protein uS7 family. As to quaternary structure, part of the 30S ribosomal subunit. Contacts proteins S9 and S11.

In terms of biological role, one of the primary rRNA binding proteins, it binds directly to 16S rRNA where it nucleates assembly of the head domain of the 30S subunit. Is located at the subunit interface close to the decoding center, probably blocks exit of the E-site tRNA. The polypeptide is Small ribosomal subunit protein uS7 (Chlamydia felis (strain Fe/C-56) (Chlamydophila felis)).